The following is a 472-amino-acid chain: UDP-N-acetylmuramate--L-alanine ligase (472 aa).

119–125 is a binding site for ATP; that stretch reads GTHGKTT.

The protein belongs to the MurCDEF family.

It localises to the cytoplasm. The catalysed reaction is UDP-N-acetyl-alpha-D-muramate + L-alanine + ATP = UDP-N-acetyl-alpha-D-muramoyl-L-alanine + ADP + phosphate + H(+). It functions in the pathway cell wall biogenesis; peptidoglycan biosynthesis. Functionally, cell wall formation. The polypeptide is UDP-N-acetylmuramate--L-alanine ligase (Caulobacter sp. (strain K31)).